The sequence spans 122 residues: Large ribosomal subunit protein uL14 (122 aa).

It belongs to the universal ribosomal protein uL14 family. As to quaternary structure, part of the 50S ribosomal subunit. Forms a cluster with proteins L3 and L19. In the 70S ribosome, L14 and L19 interact and together make contacts with the 16S rRNA in bridges B5 and B8.

Functionally, binds to 23S rRNA. Forms part of two intersubunit bridges in the 70S ribosome. The sequence is that of Large ribosomal subunit protein uL14 from Herpetosiphon aurantiacus (strain ATCC 23779 / DSM 785 / 114-95).